Reading from the N-terminus, the 1203-residue chain is Serine/threonine-protein kinase Nek1 (1203 aa).

The 255-residue stretch at 4–258 folds into the Protein kinase domain; it reads YVRLQKIGEG…VNSILEKGFI (255 aa). ATP-binding positions include 10–18 and lysine 33; that span reads IGEGSFGKA. The Proton acceptor role is filled by aspartate 128. Threonine 156 is subject to Phosphothreonine. At threonine 162 the chain carries Phosphothreonine; by autocatalysis. A disordered region spans residues 329-357; sequence LLEKKPPPKHKQAHQIPVKKMNSGEERKK. Serine 417 and serine 437 each carry phosphoserine. The residue at position 615 (threonine 615) is a Phosphothreonine. At serine 618 the chain carries Phosphoserine. Disordered regions lie at residues 643 to 662 and 674 to 708; these read LTDTQEEEMEKSNSAISSKR and AQEDEKEKQHHSGSCETVGHKDEREYETENAISSD. Over residues 674-683 the composition is skewed to basic and acidic residues; the sequence is AQEDEKEKQH. A phosphoserine mark is found at serine 750, serine 786, serine 820, and serine 832. Disordered stretches follow at residues 814–866 and 888–925; these read PSAT…LPPV and AVQQSEVCEDRIPGNVDQSCKDQRDPAVDDSPQSGCDV. The span at 839–850 shows a compositional bias: acidic residues; it reads NVEEPDDLETEV. Position 997 is a phosphoserine (serine 997). Disordered stretches follow at residues 1021 to 1045 and 1063 to 1120; these read SLEIDELEDEPIKEGPSDSEDTVFE and REQP…ETTS. A Phosphoserine modification is found at serine 1071.

The protein belongs to the protein kinase superfamily. NEK Ser/Thr protein kinase family. NIMA subfamily. Binds to CBY2. Found in a complex with CFAP410, NEK1 and SPATA7. Interacts with CFAP410. Interacts (via Ser-997 phosphorylated form) with 14-3-3 proteins. Requires Mg(2+) as cofactor. Predominantly in testes (germ cells and Sertoli cells). Lower levels in ovary (oocytes and granulosa cells), thymus and lung.

The protein resides in the nucleus. It localises to the cytoplasm. Its subcellular location is the cytoskeleton. It is found in the microtubule organizing center. The protein localises to the centrosome. The catalysed reaction is L-seryl-[protein] + ATP = O-phospho-L-seryl-[protein] + ADP + H(+). It carries out the reaction L-threonyl-[protein] + ATP = O-phospho-L-threonyl-[protein] + ADP + H(+). Functionally, phosphorylates serines and threonines, but also appears to possess tyrosine kinase activity. Involved in DNA damage checkpoint control and for proper DNA damage repair. In response to injury that includes DNA damage, NEK1 phosphorylates VDAC1 to limit mitochondrial cell death. May be implicated in the control of meiosis. Involved in cilium assembly. The chain is Serine/threonine-protein kinase Nek1 (Nek1) from Mus musculus (Mouse).